The following is a 267-amino-acid chain: Orotidine 5'-phosphate decarboxylase (267 aa).

An N-acetylserine modification is found at serine 2. Residues aspartate 37, 59–61 (KTH), and 91–100 (DRKFADIGNT) contribute to the substrate site. The Proton donor role is filled by lysine 93. Glycyl lysine isopeptide (Lys-Gly) (interchain with G-Cter in ubiquitin) cross-links involve residues lysine 93 and lysine 209. Substrate is bound by residues tyrosine 217 and arginine 235. Lysine 253 participates in a covalent cross-link: Glycyl lysine isopeptide (Lys-Gly) (interchain with G-Cter in ubiquitin).

The protein belongs to the OMP decarboxylase family.

The catalysed reaction is orotidine 5'-phosphate + H(+) = UMP + CO2. It functions in the pathway pyrimidine metabolism; UMP biosynthesis via de novo pathway; UMP from orotate: step 2/2. This chain is Orotidine 5'-phosphate decarboxylase (URA3), found in Saccharomyces cerevisiae (strain ATCC 204508 / S288c) (Baker's yeast).